The sequence spans 445 residues: MRALVLAAGKGTRMKSKIPKVLHPLSGKPMIEWVVETAGKVAQKVGVVLGFEAELVRKTLPEWVDVFVQEEQLGTAHAVMCAKDFIEPGDDVLILYGDVPLISENTLKRMIEEHRKGADVTILVADLEDPSGYGRVIQDGDKYRIIEDADLPEELKSVTTINTGFYVFSGDFLLRVLPEIKNENAKGEYYLTDAVNFAEKVRVVKTDDLLEITGVNTRKTLVWLEEQLRMRKIEELLENGVTILDPATTYIHYSVEIGMDTVIHPMTFIEGRTRVGENCEIGPMTRIVDCEIGNNVKITRSECFKSVIEDDVSVGPFARLREGTILKKSSKIGNFVEIKKSTIGEGTKAQHLSYIGDAFVGKNVNIGAGTITCNYDGKKKNPTFIEDGAFIGSNSSLVAPVRIGEGALIGAGSVITEDVPPYSLGLGRARQVVKEGWVLKKRKEE.

The tract at residues 1–218 (MRALVLAAGK…LLEITGVNTR (218 aa)) is pyrophosphorylase. UDP-N-acetyl-alpha-D-glucosamine contacts are provided by residues 6 to 9 (LAAG), Lys-20, Gln-69, 74 to 75 (GT), 96 to 98 (YGD), Gly-134, Glu-147, Asn-162, and Asn-216. Residue Asp-98 participates in Mg(2+) binding. Asn-216 serves as a coordination point for Mg(2+). The linker stretch occupies residues 219-239 (KTLVWLEEQLRMRKIEELLEN). Residues 240-445 (GVTILDPATT…GWVLKKRKEE (206 aa)) are N-acetyltransferase. Residues Arg-321 and Lys-339 each contribute to the UDP-N-acetyl-alpha-D-glucosamine site. The active-site Proton acceptor is His-351. UDP-N-acetyl-alpha-D-glucosamine-binding residues include Tyr-354 and Asn-365. Acetyl-CoA contacts are provided by residues Ala-368, 374–375 (NY), Ser-393, Ala-411, and Arg-428.

It in the N-terminal section; belongs to the N-acetylglucosamine-1-phosphate uridyltransferase family. This sequence in the C-terminal section; belongs to the transferase hexapeptide repeat family. In terms of assembly, homotrimer. Mg(2+) is required as a cofactor.

It localises to the cytoplasm. The catalysed reaction is alpha-D-glucosamine 1-phosphate + acetyl-CoA = N-acetyl-alpha-D-glucosamine 1-phosphate + CoA + H(+). The enzyme catalyses N-acetyl-alpha-D-glucosamine 1-phosphate + UTP + H(+) = UDP-N-acetyl-alpha-D-glucosamine + diphosphate. The protein operates within nucleotide-sugar biosynthesis; UDP-N-acetyl-alpha-D-glucosamine biosynthesis; N-acetyl-alpha-D-glucosamine 1-phosphate from alpha-D-glucosamine 6-phosphate (route II): step 2/2. Its pathway is nucleotide-sugar biosynthesis; UDP-N-acetyl-alpha-D-glucosamine biosynthesis; UDP-N-acetyl-alpha-D-glucosamine from N-acetyl-alpha-D-glucosamine 1-phosphate: step 1/1. It functions in the pathway bacterial outer membrane biogenesis; LPS lipid A biosynthesis. Its function is as follows. Catalyzes the last two sequential reactions in the de novo biosynthetic pathway for UDP-N-acetylglucosamine (UDP-GlcNAc). The C-terminal domain catalyzes the transfer of acetyl group from acetyl coenzyme A to glucosamine-1-phosphate (GlcN-1-P) to produce N-acetylglucosamine-1-phosphate (GlcNAc-1-P), which is converted into UDP-GlcNAc by the transfer of uridine 5-monophosphate (from uridine 5-triphosphate), a reaction catalyzed by the N-terminal domain. This chain is Bifunctional protein GlmU, found in Thermotoga petrophila (strain ATCC BAA-488 / DSM 13995 / JCM 10881 / RKU-1).